The chain runs to 318 residues: Deoxymugineic acid synthase 1 (318 aa).

An NADP(+)-binding site is contributed by Asp-48. Residue Tyr-53 is the Proton donor of the active site. His-116 is a binding site for substrate. NADP(+) contacts are provided by residues 162–163, Gln-184, 262–270, and 277–285; these read CN, FDEARMREN, and ELTEEERQR.

The protein belongs to the aldo/keto reductase family. In terms of tissue distribution, confined to cells participating in long distance transport (e.g. in the parts of pericycle cells adjacent to the protoxylem and metaxylem) in roots and to vascular bundles in shoots.

It catalyses the reaction 2'-deoxymugineate + NAD(+) = 3''-deamino-3''-oxonicotianamine + NADH + H(+). The catalysed reaction is 2'-deoxymugineate + NADP(+) = 3''-deamino-3''-oxonicotianamine + NADPH + H(+). Its pathway is siderophore biosynthesis. Functionally, catalyzes the reduction of a 3''-keto intermediate during the biosynthesis of 2'-deoxymugineic acid (DMA) from L-Met. Involved in the formation of phytosiderophores (MAs) belonging to the mugineic acid family and required to acquire iron. The polypeptide is Deoxymugineic acid synthase 1 (Oryza sativa subsp. japonica (Rice)).